A 375-amino-acid polypeptide reads, in one-letter code: tRNA-specific 2-thiouridylase MnmA (375 aa).

Residues 16-23 (GMSGGVDS) and Met-42 each bind ATP. An interaction with target base in tRNA region spans residues 102-104 (NPD). Cys-107 serves as the catalytic Nucleophile. A disulfide bond links Cys-107 and Cys-203. An ATP-binding site is contributed by Gly-131. The interval 153 to 155 (KDQ) is interaction with tRNA. Catalysis depends on Cys-203, which acts as the Cysteine persulfide intermediate. Residues 315–316 (RY) are interaction with tRNA.

It belongs to the MnmA/TRMU family.

Its subcellular location is the cytoplasm. It carries out the reaction S-sulfanyl-L-cysteinyl-[protein] + uridine(34) in tRNA + AH2 + ATP = 2-thiouridine(34) in tRNA + L-cysteinyl-[protein] + A + AMP + diphosphate + H(+). Functionally, catalyzes the 2-thiolation of uridine at the wobble position (U34) of tRNA, leading to the formation of s(2)U34. In Pseudomonas aeruginosa (strain UCBPP-PA14), this protein is tRNA-specific 2-thiouridylase MnmA.